Here is an 81-residue protein sequence, read N- to C-terminus: Putative membrane protein insertion efficiency factor (81 aa).

The interval 61 to 81 is disordered; that stretch reads NDGGFDPVPPAPSSRTSSIAE.

Belongs to the UPF0161 family.

It is found in the cell inner membrane. Functionally, could be involved in insertion of integral membrane proteins into the membrane. The protein is Putative membrane protein insertion efficiency factor of Pseudomonas entomophila (strain L48).